Here is a 300-residue protein sequence, read N- to C-terminus: Haloalkane dehalogenase (300 aa).

The AB hydrolase-1 domain occupies A32–F155. The active-site Nucleophile is D109. The Proton donor role is filled by E133. H273 acts as the Proton acceptor in catalysis.

The protein belongs to the haloalkane dehalogenase family. Type 2 subfamily. Monomer.

The enzyme catalyses 1-haloalkane + H2O = a halide anion + a primary alcohol + H(+). Functionally, catalyzes hydrolytic cleavage of carbon-halogen bonds in halogenated aliphatic compounds, leading to the formation of the corresponding primary alcohols, halide ions and protons. This Mycobacterium tuberculosis (strain ATCC 25177 / H37Ra) protein is Haloalkane dehalogenase.